We begin with the raw amino-acid sequence, 313 residues long: Acetaldehyde dehydrogenase (313 aa).

An NAD(+)-binding site is contributed by S13–I16. C133 acts as the Acyl-thioester intermediate in catalysis. NAD(+) is bound by residues S164–N172 and N291.

It belongs to the acetaldehyde dehydrogenase family.

The catalysed reaction is acetaldehyde + NAD(+) + CoA = acetyl-CoA + NADH + H(+). The sequence is that of Acetaldehyde dehydrogenase from Cupriavidus pinatubonensis (strain JMP 134 / LMG 1197) (Cupriavidus necator (strain JMP 134)).